The chain runs to 203 residues: Ribosome maturation factor RimP (203 aa).

The interval 183–203 is disordered; the sequence is FDDIETEGSAEGTTGSEEENK.

Belongs to the RimP family.

It localises to the cytoplasm. In terms of biological role, required for maturation of 30S ribosomal subunits. In Ruegeria sp. (strain TM1040) (Silicibacter sp.), this protein is Ribosome maturation factor RimP.